We begin with the raw amino-acid sequence, 375 residues long: 23S rRNA (uracil(747)-C(5))-methyltransferase RlmC (375 aa).

Cysteine 3, cysteine 11, cysteine 14, and cysteine 87 together coordinate [4Fe-4S] cluster. Positions 212, 241, 262, and 307 each coordinate S-adenosyl-L-methionine. Catalysis depends on cysteine 334, which acts as the Nucleophile.

It belongs to the class I-like SAM-binding methyltransferase superfamily. RNA M5U methyltransferase family. RlmC subfamily.

The catalysed reaction is uridine(747) in 23S rRNA + S-adenosyl-L-methionine = 5-methyluridine(747) in 23S rRNA + S-adenosyl-L-homocysteine + H(+). In terms of biological role, catalyzes the formation of 5-methyl-uridine at position 747 (m5U747) in 23S rRNA. The chain is 23S rRNA (uracil(747)-C(5))-methyltransferase RlmC from Serratia proteamaculans (strain 568).